The sequence spans 126 residues: Histone H2B type 1-N (126 aa).

Low complexity predominate over residues 1-12; the sequence is MPEPSKSAPAPK. A disordered region spans residues 1–36; it reads MPEPSKSAPAPKKGSKKAVTKAQKKDGKKRKRSRKE. Position 2 is an N-acetylproline (Pro-2). The residue at position 3 (Glu-3) is an ADP-ribosyl glutamic acid. N6-(2-hydroxyisobutyryl)lysine; alternate is present on Lys-6. The residue at position 6 (Lys-6) is an N6-(beta-hydroxybutyryl)lysine; alternate. Position 6 is an N6-acetyllysine; alternate (Lys-6). At Lys-6 the chain carries N6-butyryllysine; alternate. Lys-6 bears the N6-crotonyllysine; alternate mark. Lys-6 is modified (N6-lactoyllysine; alternate). Lys-6 is covalently cross-linked (Glycyl lysine isopeptide (Lys-Gly) (interchain with G-Cter in SUMO2); alternate). Ser-7 bears the ADP-ribosylserine mark. Residue Lys-12 is modified to N6-(beta-hydroxybutyryl)lysine; alternate. 2 positions are modified to N6-acetyllysine; alternate: Lys-12 and Lys-13. N6-crotonyllysine; alternate is present on residues Lys-12 and Lys-13. An N6-lactoyllysine; alternate modification is found at Lys-12. Lys-13 is modified (N6-(2-hydroxyisobutyryl)lysine; alternate). Position 15 is a phosphoserine; by STK4/MST1 (Ser-15). Residues Lys-16, Lys-17, Lys-21, and Lys-24 each carry the N6-acetyllysine; alternate modification. Lys-16, Lys-17, Lys-21, and Lys-24 each carry N6-crotonyllysine; alternate. An N6-lactoyllysine; alternate mark is found at Lys-16, Lys-17, Lys-21, and Lys-24. The residue at position 17 (Lys-17) is an N6-glutaryllysine; alternate. Residues Lys-21 and Lys-24 each carry the N6-(2-hydroxyisobutyryl)lysine; alternate modification. Lys-21 carries the post-translational modification N6-(beta-hydroxybutyryl)lysine; alternate. Position 21 is an N6-butyryllysine; alternate (Lys-21). Residue Lys-21 forms a Glycyl lysine isopeptide (Lys-Gly) (interchain with G-Cter in SUMO2); alternate linkage. Lys-25 carries the post-translational modification N6-(2-hydroxyisobutyryl)lysine. Lys-35 carries the N6-(2-hydroxyisobutyryl)lysine; alternate modification. Lys-35 carries the N6-(beta-hydroxybutyryl)lysine; alternate modification. Lys-35 bears the N6-crotonyllysine; alternate mark. Residue Lys-35 is modified to N6-glutaryllysine; alternate. Lys-35 carries the N6-succinyllysine; alternate modification. Lys-35 participates in a covalent cross-link: Glycyl lysine isopeptide (Lys-Gly) (interchain with G-Cter in ubiquitin); alternate. Glu-36 carries the post-translational modification PolyADP-ribosyl glutamic acid. Phosphoserine; by AMPK is present on Ser-37. N6-(2-hydroxyisobutyryl)lysine; alternate is present on residues Lys-44, Lys-47, and Lys-58. Lys-44 bears the N6-lactoyllysine; alternate mark. Lys-44 and Lys-47 each carry N6-glutaryllysine; alternate. At Lys-47 the chain carries N6-methyllysine; alternate. Lys-58 carries the N6,N6-dimethyllysine; alternate modification. At Arg-80 the chain carries Dimethylated arginine. N6-(2-hydroxyisobutyryl)lysine; alternate is present on Lys-86. Residue Lys-86 is modified to N6-acetyllysine; alternate. Residue Lys-86 is modified to N6-lactoyllysine; alternate. The residue at position 86 (Lys-86) is an N6,N6,N6-trimethyllysine; alternate. Residues Arg-87 and Arg-93 each carry the omega-N-methylarginine modification. Lys-109 is modified (N6-(2-hydroxyisobutyryl)lysine; alternate). An N6-lactoyllysine; alternate modification is found at Lys-109. N6-glutaryllysine; alternate is present on Lys-109. Lys-109 is subject to N6-methyllysine; alternate. Ser-113 carries an O-linked (GlcNAc) serine glycan. Thr-116 is modified (phosphothreonine). N6-(2-hydroxyisobutyryl)lysine; alternate is present on residues Lys-117 and Lys-121. Lys-117 carries the N6-(beta-hydroxybutyryl)lysine; alternate modification. N6-lactoyllysine; alternate occurs at positions 117 and 121. N6-glutaryllysine; alternate occurs at positions 117 and 121. Lys-117 and Lys-121 each carry N6-succinyllysine; alternate. An N6-methylated lysine; alternate modification is found at Lys-117. A Glycyl lysine isopeptide (Lys-Gly) (interchain with G-Cter in ubiquitin); alternate cross-link involves residue Lys-121.

Belongs to the histone H2B family. As to quaternary structure, the nucleosome is a histone octamer containing two molecules each of H2A, H2B, H3 and H4 assembled in one H3-H4 heterotetramer and two H2A-H2B heterodimers. The octamer wraps approximately 147 bp of DNA. Post-translationally, monoubiquitination at Lys-35 (H2BK34Ub) by the MSL1/MSL2 dimer is required for histone H3 'Lys-4' (H3K4me) and 'Lys-79' (H3K79me) methylation and transcription activation at specific gene loci, such as HOXA9 and MEIS1 loci. Similarly, monoubiquitination at Lys-121 (H2BK120Ub) by the RNF20/40 complex gives a specific tag for epigenetic transcriptional activation and is also prerequisite for histone H3 'Lys-4' and 'Lys-79' methylation. It also functions cooperatively with the FACT dimer to stimulate elongation by RNA polymerase II. H2BK120Ub also acts as a regulator of mRNA splicing: deubiquitination by USP49 is required for efficient cotranscriptional splicing of a large set of exons. In terms of processing, phosphorylated on Ser-15 (H2BS14ph) by STK4/MST1 during apoptosis; which facilitates apoptotic chromatin condensation. Also phosphorylated on Ser-15 in response to DNA double strand breaks (DSBs), and in correlation with somatic hypermutation and immunoglobulin class-switch recombination. Phosphorylation at Ser-37 (H2BS36ph) by AMPK in response to stress promotes transcription. GlcNAcylation at Ser-113 promotes monoubiquitination of Lys-121. It fluctuates in response to extracellular glucose, and associates with transcribed genes. Post-translationally, ADP-ribosylated by PARP1 or PARP2 on Ser-7 (H2BS6ADPr) in response to DNA damage. H2BS6ADPr promotes recruitment of CHD1L. Mono-ADP-ribosylated on Glu-3 (H2BE2ADPr) by PARP3 in response to single-strand breaks. Poly ADP-ribosylation on Glu-36 (H2BE35ADPr) by PARP1 regulates adipogenesis: it inhibits phosphorylation at Ser-37 (H2BS36ph), thereby blocking expression of pro-adipogenetic genes. In terms of processing, crotonylation (Kcr) is specifically present in male germ cells and marks testis-specific genes in post-meiotic cells, including X-linked genes that escape sex chromosome inactivation in haploid cells. Crotonylation marks active promoters and enhancers and confers resistance to transcriptional repressors. It is also associated with post-meiotically activated genes on autosomes. Lactylated in macrophages by EP300/P300 by using lactoyl-CoA directly derived from endogenous or exogenous lactate, leading to stimulates gene transcription.

Its subcellular location is the nucleus. The protein resides in the chromosome. In terms of biological role, core component of nucleosome. Nucleosomes wrap and compact DNA into chromatin, limiting DNA accessibility to the cellular machineries which require DNA as a template. Histones thereby play a central role in transcription regulation, DNA repair, DNA replication and chromosomal stability. DNA accessibility is regulated via a complex set of post-translational modifications of histones, also called histone code, and nucleosome remodeling. This Bos taurus (Bovine) protein is Histone H2B type 1-N (H2BC15).